We begin with the raw amino-acid sequence, 146 residues long: Hemoglobin subunit beta-2 (146 aa).

Val1 carries the post-translational modification N-acetylvaline. The Globin domain maps to 2–146; the sequence is HLHGDEKAAV…VASALAHKYH (145 aa). Lys17 carries the N6-succinyllysine modification. At Ser44 the chain carries Phosphoserine. The residue at position 59 (Lys59) is an N6-succinyllysine. Residues His63 and His92 each contribute to the heme b site. Arg104 bears the Asymmetric dimethylarginine mark. The residue at position 123 (Thr123) is a Phosphothreonine.

It belongs to the globin family. Heterotetramer of two alpha chains and two beta chains. As to expression, red blood cells.

Involved in oxygen transport from the lung to the various peripheral tissues. This Tapirus terrestris (Lowland tapir) protein is Hemoglobin subunit beta-2 (HBB2).